Here is a 499-residue protein sequence, read N- to C-terminus: MSLADELLADLEEAAEEEEGGSYGEEEEEPAIEDVQEETQLDLSGDSVKTIAKLWDSKMFAEIMMKIEEYISKQAKASEVMGPVEAAPEYRVIVDANNLTVEIENELNIIHKFIRDKYSKRFPELESLVPNALDYIRTVKELGNSLDKCKNNENLQQILTNATIMVVSVTASTTQGQQLSEEELERLEEACDMALELNASKHRIYEYVESRMSFIAPNLSIIIGASTAAKIMGVAGGLTNLSKMPACNIMLLGAQRKTLSGFSSTSVLPHTGYIYHSDIVQSLPPDLRRKAARLVAAKCTLAARVDSFHESTEGKVGYELKDEIERKFDKWQEPPPVKQVKPLPAPLDGQRKKRGGRRYRKMKERLGLTEIRKQANRMSFGEIEEDAYQEDLGFSLGHLGKSGSGRVRQTQVNEATKARISKTLQRTLQKQSVVYGGKSTIRDRSSGTASSVAFTPLQGLEIVNPQAAEKKVAEANQKYFSSMAEFLKVKGEKSGLMST.

The interval 1–37 (MSLADELLADLEEAAEEEEGGSYGEEEEEPAIEDVQE) is disordered. Residues 7 to 37 (LLADLEEAAEEEEGGSYGEEEEEPAIEDVQE) are compositionally biased toward acidic residues. Coiled coils occupy residues 85 to 120 (EAAP…KYSK) and 181 to 215 (EEEL…MSFI). In terms of domain architecture, Nop spans 215–333 (IAPNLSIIIG…IERKFDKWQE (119 aa)). Residues 334–357 (PPPVKQVKPLPAPLDGQRKKRGGR) form a disordered region. The Nuclear localization signal (NLS) signature appears at 351–364 (RKKRGGRRYRKMKE). Phosphoserine occurs at positions 379, 395, and 432. Lys438 is subject to N6-acetyllysine. A Phosphoserine modification is found at Ser439. Residue Thr440 is modified to Phosphothreonine. Position 450 is a phosphoserine (Ser450). Phosphothreonine is present on Thr455. Residues Lys471 and Lys478 each participate in a glycyl lysine isopeptide (Lys-Gly) (interchain with G-Cter in SUMO2) cross-link.

It belongs to the PRP31 family. Identified in the spliceosome B complex. Component of the U4/U6-U5 tri-snRNP complex composed of the U4, U6 and U5 snRNAs and at least PRPF3, PRPF4, PRPF6, PRPF8, PRPF31, SNRNP200, TXNL4A, SNRNP40, DDX23, CD2BP2, PPIH, SNU13, EFTUD2, SART1 and USP39. Interacts with a complex formed by SNU13 and U4 snRNA, but not with SNU13 or U4 snRNA alone. The complex formed by SNU13 and PRPF31 also binds U4atac snRNA, a characteristic component of specific, less abundant spliceosomal complexes. Interacts with PRPF6/U5 snRNP-associated 102 kDa protein. Component of some MLL1/MLL complex, at least composed of the core components KMT2A/MLL1, ASH2L, HCFC1/HCF1, WDR5 and RBBP5, as well as the facultative components BACC1, CHD8, E2F6, HSP70, INO80C, KANSL1, LAS1L, MAX, MCRS1, MGA, KAT8/MOF, PELP1, PHF20, PRP31, RING2, RUVB1/TIP49A, RUVB2/TIP49B, SENP3, TAF1, TAF4, TAF6, TAF7, TAF9 and TEX10. Interacts (via its NLS) with CTNNBL1. Interacts with USH1G. Phosphorylated by PRP4K during spliceosome assembly. In terms of tissue distribution, ubiquitously expressed.

It localises to the nucleus. The protein localises to the nucleus speckle. The protein resides in the cajal body. Involved in pre-mRNA splicing as component of the spliceosome. Required for the assembly of the U4/U5/U6 tri-snRNP complex, one of the building blocks of the spliceosome. This is U4/U6 small nuclear ribonucleoprotein Prp31 from Homo sapiens (Human).